The chain runs to 479 residues: uncharacterized protein (479 aa).

10 helical membrane-spanning segments follow: residues 11 to 31 (ILMAIPLITFLLPAPDGLSLI), 43 to 63 (IVGLVLKPYGEPVILLAAIAV), 90 to 110 (GTTWLIFTAFTLSSAFVITGL), 151 to 171 (SGGIIFPIINSVVVALGSDPE), 195 to 215 (IFLTAMAPNALALSLMAPILG), 223 to 243 (WFLAASVPGLLCLFLIPLICY), 274 to 294 (KALSVLFVIALFGWIFSNSLH), 295 to 315 (INATIVAIIVMVLCIVLSIVT), 328 to 348 (TLVWYGGIIGMSGLLEKSGFF), and 447 to 467 (WWITGAIIAFGSLIIHLTIGM).

This sequence belongs to the SLC13A/DASS transporter (TC 2.A.47) family. DIT1 subfamily.

It localises to the cell inner membrane. This is an uncharacterized protein from Haemophilus influenzae (strain ATCC 51907 / DSM 11121 / KW20 / Rd).